The chain runs to 521 residues: Acetyl-CoA hydrolase (521 aa).

276 to 280 (GIGNI) provides a ligand contact to CoA. Catalysis depends on E301, which acts as the 5-glutamyl coenzyme A thioester intermediate. Residues N391 and G395 each contribute to the CoA site.

Belongs to the acetyl-CoA hydrolase/transferase family.

The protein localises to the cytoplasm. The catalysed reaction is acetyl-CoA + H2O = acetate + CoA + H(+). Functionally, presumably involved in regulating the intracellular acetyl-CoA pool for fatty acid and cholesterol synthesis and fatty acid oxidation. The chain is Acetyl-CoA hydrolase (ach1) from Schizosaccharomyces pombe (strain 972 / ATCC 24843) (Fission yeast).